The sequence spans 215 residues: Glycerol-3-phosphate acyltransferase (215 aa).

5 helical membrane-spanning segments follow: residues methionine 1 to threonine 21, isoleucine 57 to tryptophan 77, methionine 85 to glycine 105, valine 126 to leucine 146, and valine 165 to leucine 185.

This sequence belongs to the PlsY family. As to quaternary structure, probably interacts with PlsX.

It is found in the cell inner membrane. The catalysed reaction is an acyl phosphate + sn-glycerol 3-phosphate = a 1-acyl-sn-glycero-3-phosphate + phosphate. The protein operates within lipid metabolism; phospholipid metabolism. Functionally, catalyzes the transfer of an acyl group from acyl-phosphate (acyl-PO(4)) to glycerol-3-phosphate (G3P) to form lysophosphatidic acid (LPA). This enzyme utilizes acyl-phosphate as fatty acyl donor, but not acyl-CoA or acyl-ACP. The polypeptide is Glycerol-3-phosphate acyltransferase (Crocosphaera subtropica (strain ATCC 51142 / BH68) (Cyanothece sp. (strain ATCC 51142))).